The sequence spans 91 residues: Probable Fe(2+)-trafficking protein (91 aa).

It belongs to the Fe(2+)-trafficking protein family.

Could be a mediator in iron transactions between iron acquisition and iron-requiring processes, such as synthesis and/or repair of Fe-S clusters in biosynthetic enzymes. The chain is Probable Fe(2+)-trafficking protein from Burkholderia ambifaria (strain MC40-6).